We begin with the raw amino-acid sequence, 413 residues long: Cardiolipin synthase B (413 aa).

PLD phosphodiesterase domains lie at 108–135 (IFRRMHRKIVVIDDRIAFVGGINYSAEH) and 285–312 (RRRPLHGKVALMDDHWATVGSSNLDPLS). Catalysis depends on residues His113, Lys115, Asp120, His290, Lys292, and Asp297. The tract at residues 388–413 (AQVPPPAQPEMETQDRVDPENTGVKP) is disordered.

The protein belongs to the phospholipase D family. Cardiolipin synthase subfamily. ClsB sub-subfamily.

It localises to the cell membrane. The enzyme catalyses 2 a 1,2-diacyl-sn-glycero-3-phospho-(1'-sn-glycerol) = a cardiolipin + glycerol. Functionally, catalyzes the phosphatidyl group transfer from one phosphatidylglycerol molecule to another to form cardiolipin (CL) (diphosphatidylglycerol) and glycerol. The protein is Cardiolipin synthase B of Salmonella typhimurium (strain LT2 / SGSC1412 / ATCC 700720).